The chain runs to 292 residues: Ribosomal protein L11 methyltransferase (292 aa).

The S-adenosyl-L-methionine site is built by T145, G166, D188, and N229.

This sequence belongs to the methyltransferase superfamily. PrmA family.

It localises to the cytoplasm. It catalyses the reaction L-lysyl-[protein] + 3 S-adenosyl-L-methionine = N(6),N(6),N(6)-trimethyl-L-lysyl-[protein] + 3 S-adenosyl-L-homocysteine + 3 H(+). Functionally, methylates ribosomal protein L11. This is Ribosomal protein L11 methyltransferase from Pseudoalteromonas atlantica (strain T6c / ATCC BAA-1087).